A 468-amino-acid polypeptide reads, in one-letter code: Neuronal acetylcholine receptor subunit alpha-5 (468 aa).

A signal peptide spans 1 to 22 (MATRGSGPRAPRLLLLVQLVAG). Residues 23–254 (RCGLAGAAGG…VIKRLPLFYT (232 aa)) are Extracellular-facing. Residues Asn155, Asn183, and Asn229 are each glycosylated (N-linked (GlcNAc...) asparagine). Cys170 and Cys184 are oxidised to a cystine. A disulfide bridge links Cys234 with Cys235. 3 helical membrane-spanning segments follow: residues 255 to 275 (LFLI…FYLP), 282 to 302 (ICLC…IEEI), and 317 to 337 (LVFT…AINI). The Cytoplasmic segment spans residues 338–429 (HHRSSSTHNA…WKFIAQVLDR (92 aa)). The chain crosses the membrane as a helical span at residues 430 to 451 (MFLWTFLFVSIVGSLGLFVPVI). Topologically, residues 452 to 468 (YKWANILIPVHIGNANK) are extracellular.

The protein belongs to the ligand-gated ion channel (TC 1.A.9) family. Acetylcholine receptor (TC 1.A.9.1) subfamily. Alpha-5/CHRNA5 sub-subfamily. In terms of assembly, neuronal AChR that forms heteropentamers composed of two different type of subunits: alpha and non-alpha (beta). CHRNA5/alpha-5 subunit is only able to form functional nAChRs when co-assembled with another alpha subunit, can be combined to CHRNA4/alpha-4 or CHRNA3/alpha-3 and CHRNB4/beta-4 or CHRNB2/beta-2 to give rise to functional receptors. Interacts with LYPD6.

The protein localises to the synaptic cell membrane. It is found in the cell membrane. It carries out the reaction Ca(2+)(in) = Ca(2+)(out). It catalyses the reaction K(+)(in) = K(+)(out). The enzyme catalyses Na(+)(in) = Na(+)(out). With respect to regulation, activated by a myriad of ligands such as acetylcholine, cytisine, nicotine, choline and epibatidine. Its function is as follows. Component of neuronal acetylcholine receptors (nAChRs) that function as pentameric, ligand-gated cation channels with high calcium permeability among other activities. nAChRs are excitatory neurotrasnmitter receptors formed by a collection of nAChR subunits known to mediate synaptic transmission in the nervous system and the neuromuscular junction. Each nAchR subunit confers differential attributes to channel properties, including activation, deactivation and desensitization kinetics, pH sensitivity, cation permeability, and binding to allosteric modulators. Has an accessory rather than functional role and is only able to form functional nAChRs when co-assembled with another beta subunit. Participates in pentameric assemblies along with CHRNA3, CHRNA4, CHRNB2 and CHRNB4. Increases receptor sensitivity to acetylcholine and nicotine when associated with CHRNA4 and CHRNB2. Plays a role in nicotine addiction. This Pan troglodytes (Chimpanzee) protein is Neuronal acetylcholine receptor subunit alpha-5 (CHRNA5).